Consider the following 67-residue polypeptide: Large ribosomal subunit protein uL29 (67 aa).

The protein belongs to the universal ribosomal protein uL29 family.

The polypeptide is Large ribosomal subunit protein uL29 (Polaromonas naphthalenivorans (strain CJ2)).